The following is a 455-amino-acid chain: MSLVPKKSIDDAVVKGKKVLIRVDFNVPVKNGEITNDFRIRSALPTIQKVLKEGGSCILMSHLGRPKGAKMSDPKPAKSVRGYEEAATLRPVAARLSELLGQKVEFAPDCLDAASYAAKLKGGDVLLLENVRFYAEEGSKKEEERDAMAKVLAAYGDVYVSDAFGTAHRDSADMTGIPKVLGAGYAGYLMEKEINYFAQVLNNPPRPLVAIVGGAKVSDKIQLLDNMLGRINYLVIGGAMAYTFQKAQGHAIGISMCEEDKLDLAKSLLKKAQERNVEVLLPVDHVCNKEFQGVDAPLVTKDVEIPEGYMALDIGPKTIKIYEDVIAKCKSTIWNGPMGVFEMPCYSKGTFAVAKAMGNGTQKNGLMSIIGGGDTASAAELSGEAKNMSHVSTGGGASLELLEGKSLPGVTVLTNKDAKAPAAAAAAGGDCPCGSGCAAVPAAATATVSMVLASP.

(2R)-3-phosphoglycerate is bound by residues valine 23, aspartate 24, phenylalanine 25, asparagine 26, arginine 39, serine 61, histidine 62, glycine 64, arginine 65, arginine 132, histidine 168, and arginine 169. Residues glycine 214 and alanine 215 each coordinate ADP. Residue glycine 214 participates in CDP binding. Positions 215 and 216 each coordinate AMP. Alanine 215 is a binding site for ATP. Residue alanine 215 coordinates Mg(2+). Lysine 216 provides a ligand contact to (2R)-3-phosphoglycerate. Aspartate 219 contacts CDP. Residue aspartate 219 coordinates Mg(2+). ADP-binding residues include lysine 220 and glycine 238. AMP is bound at residue lysine 220. An ATP-binding site is contributed by lysine 220. Position 238 (glycine 238) interacts with CDP. Residues alanine 239 and alanine 311 each coordinate AMP. ATP-binding residues include alanine 239 and alanine 311. Residues alanine 311 and asparagine 335 each contribute to the ADP site. Residues glycine 336 and phenylalanine 341 each contribute to the CDP site. Residues phenylalanine 341, glutamate 342, aspartate 374, and threonine 375 each contribute to the ADP site. Residue glutamate 342 coordinates AMP. ATP contacts are provided by glutamate 342, aspartate 374, and threonine 375. Aspartate 374 serves as a coordination point for Mg(2+). Residues 417–455 form a topogenic signal region; it reads DAKAPAAAAAAGGDCPCGSGCAAVPAAATATVSMVLASP.

The protein belongs to the phosphoglycerate kinase family. Monomer. Requires Mg(2+) as cofactor.

Its subcellular location is the glycosome. It catalyses the reaction (2R)-3-phosphoglycerate + ATP = (2R)-3-phospho-glyceroyl phosphate + ADP. It functions in the pathway carbohydrate degradation; glycolysis; pyruvate from D-glyceraldehyde 3-phosphate: step 2/5. The polypeptide is Phosphoglycerate kinase, glycosomal (PGKC) (Crithidia fasciculata).